Consider the following 119-residue polypeptide: Ribonuclease P protein component (119 aa).

This sequence belongs to the RnpA family. In terms of assembly, consists of a catalytic RNA component (M1 or rnpB) and a protein subunit.

It carries out the reaction Endonucleolytic cleavage of RNA, removing 5'-extranucleotides from tRNA precursor.. Functionally, RNaseP catalyzes the removal of the 5'-leader sequence from pre-tRNA to produce the mature 5'-terminus. It can also cleave other RNA substrates such as 4.5S RNA. The protein component plays an auxiliary but essential role in vivo by binding to the 5'-leader sequence and broadening the substrate specificity of the ribozyme. The polypeptide is Ribonuclease P protein component (Salmonella paratyphi A (strain AKU_12601)).